Consider the following 398-residue polypeptide: Ribosomal RNA small subunit methyltransferase B (398 aa).

Residues 221–227 (CGGAGLK), Asp242, Asp268, and Asp283 each bind S-adenosyl-L-methionine. Residue Cys336 is the Nucleophile of the active site.

This sequence belongs to the class I-like SAM-binding methyltransferase superfamily. RsmB/NOP family.

It is found in the cytoplasm. It carries out the reaction cytidine(967) in 16S rRNA + S-adenosyl-L-methionine = 5-methylcytidine(967) in 16S rRNA + S-adenosyl-L-homocysteine + H(+). In terms of biological role, specifically methylates the cytosine at position 967 (m5C967) of 16S rRNA. The polypeptide is Ribosomal RNA small subunit methyltransferase B (Thermus thermophilus (strain ATCC 27634 / DSM 579 / HB8)).